Consider the following 404-residue polypeptide: Serine/threonine transporter SstT (404 aa).

The next 9 helical transmembrane spans lie at 11-31, 44-64, 82-102, 144-164, 179-199, 218-238, 290-310, 316-336, and 363-383; these read IINA…IILA, LGGL…FVLV, IISL…TMSF, TANY…LHHA, VSFI…GLVA, GVLL…MVFI, IPLG…VLTL, MGIQ…AISA, and VAMQ…SAET.

It belongs to the dicarboxylate/amino acid:cation symporter (DAACS) (TC 2.A.23) family.

It localises to the cell inner membrane. The enzyme catalyses L-serine(in) + Na(+)(in) = L-serine(out) + Na(+)(out). It catalyses the reaction L-threonine(in) + Na(+)(in) = L-threonine(out) + Na(+)(out). Functionally, involved in the import of serine and threonine into the cell, with the concomitant import of sodium (symport system). The protein is Serine/threonine transporter SstT of Desulfotalea psychrophila (strain LSv54 / DSM 12343).